A 119-amino-acid polypeptide reads, in one-letter code: MKKVGEEEIKQEENEKEKIVKKLNESDVKSIIEDVLKNKEKYGLEARWLLGMDDNKNDSIEVLLGRVNFIEVERGFIEIVPMTRMVVLLKRVNYYTSNYTSYNDELYVFFYSVGWVKFS.

Residues 1–29 adopt a coiled-coil conformation; that stretch reads MKKVGEEEIKQEENEKEKIVKKLNESDVK.

This is an uncharacterized protein from Acidianus sp. F28 (AFV-2).